The primary structure comprises 447 residues: Tubulin beta chain (447 aa).

Positions 11, 69, 138, 142, 143, 144, 204, and 226 each coordinate GTP. A Mg(2+)-binding site is contributed by glutamate 69. Residues 424-447 form a disordered region; that stretch reads QYQEASVSDAEEEYDEEAPLEGEE. Residues 432–447 are compositionally biased toward acidic residues; that stretch reads DAEEEYDEEAPLEGEE.

It belongs to the tubulin family. As to quaternary structure, dimer of alpha and beta chains. A typical microtubule is a hollow water-filled tube with an outer diameter of 25 nm and an inner diameter of 15 nM. Alpha-beta heterodimers associate head-to-tail to form protofilaments running lengthwise along the microtubule wall with the beta-tubulin subunit facing the microtubule plus end conferring a structural polarity. Microtubules usually have 13 protofilaments but different protofilament numbers can be found in some organisms and specialized cells. It depends on Mg(2+) as a cofactor.

It localises to the cytoplasm. The protein localises to the cytoskeleton. Its function is as follows. Tubulin is the major constituent of microtubules, a cylinder consisting of laterally associated linear protofilaments composed of alpha- and beta-tubulin heterodimers. Microtubules grow by the addition of GTP-tubulin dimers to the microtubule end, where a stabilizing cap forms. Below the cap, tubulin dimers are in GDP-bound state, owing to GTPase activity of alpha-tubulin. This Zymoseptoria tritici (Speckled leaf blotch fungus) protein is Tubulin beta chain (TUB1).